We begin with the raw amino-acid sequence, 282 residues long: Pantothenate synthetase (282 aa).

30–37 (MGYLHEGH) contributes to the ATP binding site. His-37 (proton donor) is an active-site residue. A (R)-pantoate-binding site is contributed by Gln-61. Residue Gln-61 participates in beta-alanine binding. 147 to 150 (GMKD) serves as a coordination point for ATP. A (R)-pantoate-binding site is contributed by Gln-153. ATP-binding positions include Val-176 and 184–187 (KSSR).

It belongs to the pantothenate synthetase family. In terms of assembly, homodimer.

Its subcellular location is the cytoplasm. It catalyses the reaction (R)-pantoate + beta-alanine + ATP = (R)-pantothenate + AMP + diphosphate + H(+). Its pathway is cofactor biosynthesis; (R)-pantothenate biosynthesis; (R)-pantothenate from (R)-pantoate and beta-alanine: step 1/1. Its function is as follows. Catalyzes the condensation of pantoate with beta-alanine in an ATP-dependent reaction via a pantoyl-adenylate intermediate. In Bacillus cereus (strain G9842), this protein is Pantothenate synthetase.